A 550-amino-acid chain; its full sequence is Glucose-6-phosphate isomerase (550 aa).

Catalysis depends on Glu356, which acts as the Proton donor. Residues His387 and Lys515 contribute to the active site.

This sequence belongs to the GPI family.

It is found in the cytoplasm. It catalyses the reaction alpha-D-glucose 6-phosphate = beta-D-fructose 6-phosphate. It functions in the pathway carbohydrate biosynthesis; gluconeogenesis. It participates in carbohydrate degradation; glycolysis; D-glyceraldehyde 3-phosphate and glycerone phosphate from D-glucose: step 2/4. In terms of biological role, catalyzes the reversible isomerization of glucose-6-phosphate to fructose-6-phosphate. The chain is Glucose-6-phosphate isomerase from Vibrio cholerae serotype O1 (strain ATCC 39541 / Classical Ogawa 395 / O395).